We begin with the raw amino-acid sequence, 736 residues long: Probable potassium transport system protein Kup 2 (736 aa).

12 helical membrane-spanning segments follow: residues 1 to 21 (MAIV…LYTA), 42 to 62 (MLSL…VLIA), 84 to 104 (GAWL…DSVL), 126 to 146 (LFDE…VILF), 156 to 176 (IGKV…IVGV), 204 to 224 (AAGI…EALY), 239 to 259 (WPFI…WMLA), 287 to 307 (AVIL…TGAF), 334 to 354 (LYIP…LAIF), 364 to 384 (YGLA…VYLW), 390 to 410 (VGAI…FIAS), and 414 to 434 (FLHG…VMYT). Disordered regions lie at residues 649–678 (TDTA…DTTS) and 693–736 (AEAR…KQKR). Low complexity-rich tracts occupy residues 660-677 (PTRA…MDTT) and 700-709 (EAAAADAPAE). Basic and acidic residues predominate over residues 710–721 (QGDKGDKGKAEN).

The protein belongs to the HAK/KUP transporter (TC 2.A.72) family.

The protein localises to the cell membrane. The catalysed reaction is K(+)(in) + H(+)(in) = K(+)(out) + H(+)(out). Functionally, transport of potassium into the cell. Likely operates as a K(+):H(+) symporter. This is Probable potassium transport system protein Kup 2 from Bifidobacterium longum (strain NCC 2705).